A 199-amino-acid polypeptide reads, in one-letter code: Protein shisa-like-1 (199 aa).

The signal sequence occupies residues 1–25 (MTSCGQQSLNVLAVLFSLLFSAVLS). Residues 26–97 (AHFRVCEPYT…SEGYMHNNYT (72 aa)) lie on the Extracellular side of the membrane. Residues Asn53 and Asn95 are each glycosylated (N-linked (GlcNAc...) asparagine). A helical transmembrane segment spans residues 98-118 (ALLGVWIYGFFVLMLLVLDLL). Residues 119-199 (YYSAMNYDIC…PLMTFQSSSA (81 aa)) lie on the Cytoplasmic side of the membrane. The tract at residues 146–199 (PRRWGNPARAPRPGQRAPQPQPPPGPLPQAPQAVHTLRGDAHSPPLMTFQSSSA) is disordered. Positions 152-163 (PARAPRPGQRAP) are enriched in low complexity. Residues 164 to 174 (QPQPPPGPLPQ) show a composition bias toward pro residues.

Belongs to the shisa family.

The protein localises to the membrane. The polypeptide is Protein shisa-like-1 (Homo sapiens (Human)).